A 1370-amino-acid polypeptide reads, in one-letter code: MAYSYTERKRIRKNFGSRDSVLEIPYLLQMQKDAYTAFLQADVHPKKRTAEGLQAAFEAAFPIISHNGFVEMKYLEYNLAKPAFDVRECQTRGLTFASAVRAKVQLFIYDRESSTSQNKVIKEVKEQEVYMGEVPLMTTKGSFIINGTERVIVSQLHRSPGVFFEHDKGKTHSSGKLLFSARIIPYRGSWLDFEFDPKDFLYFRVDRRRKMPVTILLKAIGLNHESILANFFVNDNFRLMDSGAQMEFVAERLRGEVARFDITDKSGKVIVAKEKRVTARHTRELEQSGTTHISVPEDFLLGRVVARNIVDTDTGEILAKANEELTEALIKKLRLAGVQDLPCIYTNELDQGAYISQTLRSDETVDEFAARVAIYRMMRPGEPPTEDAVQALFQRLFYNPDTYDLSRVGRMKFNAKMGRPESTGPMVLTNEDILAVVKILVDLRNGRGDVDDIDHLGNRRVRCVGELAENQYRTGLARIEKAVKERLGQAEQEPLMPHDLINSKPISAALKEFFGASQLSQFMDQTNPLSEITHKRRVSALGPGGLTRERAGFEVRDVHVTHYGRVCPIETPEGPNIGLINSLALYARLNDYGFIETPYRRVVDGKVTMEIDYLSAIEEGKFVIAQANAVLDKDGKLTGEMISAREAGETIFAGPERVQYMDVSPAQIVSVAASLVPFLEHDDANRALMGANMSRQAVPILRPEKPMVGTGIERVAAIDSGTVVTATRGGMVDYVDATRVVIRVNDDEAQAGEVGVDIYNLIKYQRSNQNTNIHQRPIVKKGDMLAKGDVIADGASTDLGELALGQNMLIGFMTWNGYNFEDSILISERVVADDRYTSIHIEELVVMARDTKLGCEEITRDIPNLSEQQLNRLDESGIIYVGAEVQPGDTLVGKVTPKGETTLTPEEKLLRAIFGEKASDVKDTSLRVDQGSQGTVIDVQVFTREGIVRDRRAQQIIDDELKRFRLDLNDQLRLVEADSFDRIEKLLVGKVANGGPQKLAKGTTIDKAYLTSVEKHHWFDIRPAEDDVAAQLESIKNSMEQTRHSFDLAFEEKRKKLTQGDELPAGVLKMVKVYLAVKRHLQPGDKMAGRHGNKGVVSKIVPVEDMPFMADGTPCDIVLNPLGVPSRMNIGQVLEVHLGWAAKGIGQRIGDMLQAEAKVAELRKFLDELYNGTGRKEDLAQLSDDEVLEMAGNLTSGVPFATPVFDGASEADIGAMLKLAYPEDAIRQKGLTPARTQAYLYDGRTGDPFERPTTIGYMHYLKLHHLVDDKMHARSTGPYSLVTQQPLGGKAQFGGQRFGEMEVWALEAYGAAYTLQEMLTVKSDDVQGRTKVYESIVKGEHSIEAGMPESFNVLVKEIRSLGIDIELERG.

The protein belongs to the RNA polymerase beta chain family. As to quaternary structure, the RNAP catalytic core consists of 2 alpha, 1 beta, 1 beta' and 1 omega subunit. When a sigma factor is associated with the core the holoenzyme is formed, which can initiate transcription.

It carries out the reaction RNA(n) + a ribonucleoside 5'-triphosphate = RNA(n+1) + diphosphate. DNA-dependent RNA polymerase catalyzes the transcription of DNA into RNA using the four ribonucleoside triphosphates as substrates. The chain is DNA-directed RNA polymerase subunit beta from Albidiferax ferrireducens (strain ATCC BAA-621 / DSM 15236 / T118) (Rhodoferax ferrireducens).